Reading from the N-terminus, the 510-residue chain is Probable gamma-aminobutyrate transaminase 3, mitochondrial (510 aa).

Residues 1–41 constitute a mitochondrion transit peptide; it reads MICRSLLLLRSNAASKASSIVKHVAATGCLPEYSSEAPARY. Residue 166-167 participates in pyridoxal 5'-phosphate binding; that stretch reads GS. Y199 is a binding site for substrate. D306 is a pyridoxal 5'-phosphate binding site. Position 335 (K335) interacts with substrate. The residue at position 335 (K335) is an N6-(pyridoxal phosphate)lysine.

The protein belongs to the class-III pyridoxal-phosphate-dependent aminotransferase family.

The protein localises to the mitochondrion. It carries out the reaction 4-aminobutanoate + pyruvate = succinate semialdehyde + L-alanine. It catalyses the reaction 4-aminobutanoate + glyoxylate = succinate semialdehyde + glycine. Functionally, transaminase that degrades gamma-amino butyric acid (GABA). The sequence is that of Probable gamma-aminobutyrate transaminase 3, mitochondrial from Oryza sativa subsp. indica (Rice).